The following is a 241-amino-acid chain: Pyridoxine 5'-phosphate synthase (241 aa).

Asparagine 7 is a binding site for 3-amino-2-oxopropyl phosphate. 9–10 (DH) provides a ligand contact to 1-deoxy-D-xylulose 5-phosphate. 3-amino-2-oxopropyl phosphate is bound at residue arginine 18. Histidine 43 (proton acceptor) is an active-site residue. Residues arginine 45 and histidine 50 each contribute to the 1-deoxy-D-xylulose 5-phosphate site. The active-site Proton acceptor is glutamate 70. Threonine 100 provides a ligand contact to 1-deoxy-D-xylulose 5-phosphate. Histidine 191 (proton donor) is an active-site residue. Residues glycine 192 and 213–214 (GH) each bind 3-amino-2-oxopropyl phosphate.

This sequence belongs to the PNP synthase family. Homooctamer; tetramer of dimers.

The protein resides in the cytoplasm. The enzyme catalyses 3-amino-2-oxopropyl phosphate + 1-deoxy-D-xylulose 5-phosphate = pyridoxine 5'-phosphate + phosphate + 2 H2O + H(+). It participates in cofactor biosynthesis; pyridoxine 5'-phosphate biosynthesis; pyridoxine 5'-phosphate from D-erythrose 4-phosphate: step 5/5. Catalyzes the complicated ring closure reaction between the two acyclic compounds 1-deoxy-D-xylulose-5-phosphate (DXP) and 3-amino-2-oxopropyl phosphate (1-amino-acetone-3-phosphate or AAP) to form pyridoxine 5'-phosphate (PNP) and inorganic phosphate. This is Pyridoxine 5'-phosphate synthase from Maridesulfovibrio salexigens (strain ATCC 14822 / DSM 2638 / NCIMB 8403 / VKM B-1763) (Desulfovibrio salexigens).